The chain runs to 216 residues: Ribonuclease HII (216 aa).

Residues Trp33 to Leu216 enclose the RNase H type-2 domain. A divalent metal cation is bound by residues Asp39, Glu40, and Asp130.

Belongs to the RNase HII family. The cofactor is Mn(2+). Mg(2+) serves as cofactor.

It is found in the cytoplasm. The catalysed reaction is Endonucleolytic cleavage to 5'-phosphomonoester.. Functionally, endonuclease that specifically degrades the RNA of RNA-DNA hybrids. This Sinorhizobium medicae (strain WSM419) (Ensifer medicae) protein is Ribonuclease HII.